A 155-amino-acid chain; its full sequence is Small ribosomal subunit protein uS7 (155 aa).

It belongs to the universal ribosomal protein uS7 family. In terms of assembly, part of the 30S ribosomal subunit. Contacts proteins S9 and S11.

One of the primary rRNA binding proteins, it binds directly to 16S rRNA where it nucleates assembly of the head domain of the 30S subunit. Is located at the subunit interface close to the decoding center, probably blocks exit of the E-site tRNA. This chain is Small ribosomal subunit protein uS7, found in Chlorobium phaeobacteroides (strain BS1).